The primary structure comprises 509 residues: UDP-N-acetylmuramoyl-L-alanyl-D-glutamate--2,6-diaminopimelate ligase (509 aa).

Ser-32 contributes to the UDP-N-acetyl-alpha-D-muramoyl-L-alanyl-D-glutamate binding site. 117–123 (GTNGKTT) provides a ligand contact to ATP. Residues 159 to 160 (TT), Ser-186, Gln-192, and Arg-194 contribute to the UDP-N-acetyl-alpha-D-muramoyl-L-alanyl-D-glutamate site. At Lys-226 the chain carries N6-carboxylysine. Meso-2,6-diaminopimelate-binding positions include Arg-401, 425 to 428 (DNPR), Gly-476, and Glu-480. The Meso-diaminopimelate recognition motif signature appears at 425-428 (DNPR).

Belongs to the MurCDEF family. MurE subfamily. The cofactor is Mg(2+). Carboxylation is probably crucial for Mg(2+) binding and, consequently, for the gamma-phosphate positioning of ATP.

It is found in the cytoplasm. The catalysed reaction is UDP-N-acetyl-alpha-D-muramoyl-L-alanyl-D-glutamate + meso-2,6-diaminopimelate + ATP = UDP-N-acetyl-alpha-D-muramoyl-L-alanyl-gamma-D-glutamyl-meso-2,6-diaminopimelate + ADP + phosphate + H(+). It functions in the pathway cell wall biogenesis; peptidoglycan biosynthesis. Catalyzes the addition of meso-diaminopimelic acid to the nucleotide precursor UDP-N-acetylmuramoyl-L-alanyl-D-glutamate (UMAG) in the biosynthesis of bacterial cell-wall peptidoglycan. This chain is UDP-N-acetylmuramoyl-L-alanyl-D-glutamate--2,6-diaminopimelate ligase, found in Prochlorococcus marinus (strain NATL1A).